Reading from the N-terminus, the 528-residue chain is GMP synthase [glutamine-hydrolyzing] (528 aa).

The 192-residue stretch at 13–204 (AIVILDFGSQ…VYDICSCEPD (192 aa)) folds into the Glutamine amidotransferase type-1 domain. C90 (nucleophile) is an active-site residue. Active-site residues include H178 and E180. Residues 205–403 (WTTNLFIDEA…LGLPDEIVRR (199 aa)) enclose the GMPS ATP-PPase domain. An ATP-binding site is contributed by 232 to 238 (SGGVDSS).

In terms of assembly, homodimer.

It carries out the reaction XMP + L-glutamine + ATP + H2O = GMP + L-glutamate + AMP + diphosphate + 2 H(+). Its pathway is purine metabolism; GMP biosynthesis; GMP from XMP (L-Gln route): step 1/1. Catalyzes the synthesis of GMP from XMP. The polypeptide is GMP synthase [glutamine-hydrolyzing] (Prochlorococcus marinus (strain NATL1A)).